A 328-amino-acid chain; its full sequence is Phenylalanine--tRNA ligase alpha subunit (328 aa).

Position 245 (E245) interacts with Mg(2+).

This sequence belongs to the class-II aminoacyl-tRNA synthetase family. Phe-tRNA synthetase alpha subunit type 1 subfamily. In terms of assembly, tetramer of two alpha and two beta subunits. Requires Mg(2+) as cofactor.

It is found in the cytoplasm. It catalyses the reaction tRNA(Phe) + L-phenylalanine + ATP = L-phenylalanyl-tRNA(Phe) + AMP + diphosphate + H(+). The polypeptide is Phenylalanine--tRNA ligase alpha subunit (Helicobacter pylori (strain HPAG1)).